We begin with the raw amino-acid sequence, 418 residues long: CinA-like protein (418 aa).

Belongs to the CinA family.

The chain is CinA-like protein from Leptospira interrogans serogroup Icterohaemorrhagiae serovar copenhageni (strain Fiocruz L1-130).